The primary structure comprises 165 residues: Large ribosomal subunit protein uL10 (165 aa).

The protein belongs to the universal ribosomal protein uL10 family. Part of the ribosomal stalk of the 50S ribosomal subunit. The N-terminus interacts with L11 and the large rRNA to form the base of the stalk. The C-terminus forms an elongated spine to which L12 dimers bind in a sequential fashion forming a multimeric L10(L12)X complex.

Forms part of the ribosomal stalk, playing a central role in the interaction of the ribosome with GTP-bound translation factors. This chain is Large ribosomal subunit protein uL10, found in Buchnera aphidicola subsp. Acyrthosiphon pisum (strain 5A).